The following is a 1315-amino-acid chain: Chaoptin (1315 aa).

Residues Met-1–Ala-29 form the signal peptide. Asn-77 is a glycosylation site (N-linked (GlcNAc...) (high mannose) asparagine; alternate). Asn-77 carries N-linked (GlcNAc...) (paucimannose) asparagine; alternate glycosylation. 9 LRR repeats span residues Lys-80 to Ser-101, Gly-103 to Gly-124, Ser-128 to His-149, Lys-152 to Gly-173, Ser-177 to Gly-198, Ile-201 to Asp-222, Arg-226 to Pro-247, Ser-250 to Glu-271, and Asn-279 to Tyr-300. N-linked (GlcNAc...) (paucimannose) asparagine; alternate glycosylation is present at Asn-267. The N-linked (GlcNAc...) (complex) asparagine; alternate glycan is linked to Asn-267. Asn-305 is a glycosylation site (N-linked (GlcNAc...) (high mannose) asparagine; alternate). N-linked (GlcNAc...) (paucimannose) asparagine; alternate glycosylation is present at Asn-305. LRR repeat units lie at residues Arg-326 to Ser-347, Ser-351 to Asn-372, Val-375 to Asn-396, Thr-401 to Thr-424, Gly-477 to Glu-498, Ser-527 to Phe-548, Asn-551 to Gly-572, Lys-577 to Asp-598, Ala-601 to Asn-622, Glu-625 to Asn-646, Lys-649 to Gln-670, Asn-676 to Ser-696, Asn-708 to Pro-729, Ser-733 to Asn-754, His-757 to Asn-778, Gln-781 to Pro-802, Gly-805 to Asn-826, Gly-828 to Ser-849, Thr-854 to Asn-875, Ser-879 to Thr-900, Lys-903 to Gly-924, Ser-928 to Lys-948, Tyr-949 to Asn-970, Asn-973 to Leu-994, His-996 to Gly-1017, Asp-1021 to Pro-1044, and His-1045 to Leu-1066. An N-linked (GlcNAc...) (high mannose) asparagine glycan is attached at Asn-361. N-linked (GlcNAc...) asparagine glycosylation is present at Asn-422. N-linked (GlcNAc...) (high mannose) asparagine glycosylation occurs at Asn-680. The N-linked (GlcNAc...) (high mannose) asparagine; alternate glycan is linked to Asn-692. Asn-692 carries N-linked (GlcNAc...) (paucimannose) asparagine; alternate glycosylation. A glycan (N-linked (GlcNAc...) (high mannose) asparagine) is linked at Asn-718. N-linked (GlcNAc...) asparagine glycosylation occurs at Asn-746. A glycan (N-linked (GlcNAc...) (high mannose) asparagine) is linked at Asn-936. A glycan (N-linked (GlcNAc...) (paucimannose) asparagine) is linked at Asn-970. An N-linked (GlcNAc...) (complex) asparagine glycan is attached at Asn-1012. N-linked (GlcNAc...) (high mannose) asparagine glycans are attached at residues Asn-1122, Asn-1152, and Asn-1171. The region spanning Thr-1211–Asn-1274 is the LRRCT domain.

The protein belongs to the chaoptin family. As to expression, expressed in photoreceptor cells and their axons in the adult retina, the ocellus and larval photoreceptor organ.

The protein resides in the cell membrane. Its function is as follows. Required for photoreceptor cell morphogenesis. Mediates homophilic cellular adhesion. This Drosophila melanogaster (Fruit fly) protein is Chaoptin (chp).